The chain runs to 376 residues: Palmitoyl-[acyl-carrier-protein] 4-desaturase 2, chloroplastic (376 aa).

Residues 1–33 (MELHLALRASPLPAADPGRRPPPPRGNFATNCT) constitute a chloroplast transit peptide. 6 residues coordinate Fe cation: E114, E149, H152, E202, E235, and H238.

It belongs to the fatty acid desaturase type 2 family. Homodimer. The cofactor is Fe(2+). In terms of tissue distribution, preferentially expressed in the flower labellum.

Its subcellular location is the plastid. It localises to the chloroplast stroma. The catalysed reaction is hexadecanoyl-[ACP] + 2 reduced [2Fe-2S]-[ferredoxin] + O2 + 2 H(+) = (4Z)-hexadecenoyl-[ACP] + 2 oxidized [2Fe-2S]-[ferredoxin] + 2 H2O. The enzyme catalyses octadecanoyl-[ACP] + 2 reduced [2Fe-2S]-[ferredoxin] + O2 + 2 H(+) = (9Z)-octadecenoyl-[ACP] + 2 oxidized [2Fe-2S]-[ferredoxin] + 2 H2O. The protein operates within lipid metabolism; fatty acid metabolism. Functionally, converts stearoyl-ACP to oleoyl-ACP by introduction of a cis double bond between carbons 9 and 10 of the acyl chain. Converts palmitoyl-ACP to (4Z)-hexadec-4-enoyl-ACP by introduction of a cis double bond between carbons 4 and 5 of the acyl chain. Catalyzes the desaturation of saturated fatty acid 18:0 and 16:0 to generate 18:1 (delta-9) and 16:1 (delta-4) intermediates, expected to give rise to 9-alkenes and 12-alkenes, respectively. This chain is Palmitoyl-[acyl-carrier-protein] 4-desaturase 2, chloroplastic (SAD2), found in Ophrys sphegodes (Early spider orchid).